The sequence spans 308 residues: D-alanine--D-alanine ligase (308 aa).

Residues 103 to 302 (KTVMATAGVP…FDELVQWMVE (200 aa)) form the ATP-grasp domain. An ATP-binding site is contributed by 130–184 (MAPPYVIKPVADGSSVGVFMVTEAHEHPPQELFRDDWPHGEQLLVEKYVAGKELT). The Mg(2+) site is built by Asp252, Glu269, and Asn271.

The protein belongs to the D-alanine--D-alanine ligase family. It depends on Mg(2+) as a cofactor. Mn(2+) is required as a cofactor.

It localises to the cytoplasm. It carries out the reaction 2 D-alanine + ATP = D-alanyl-D-alanine + ADP + phosphate + H(+). It functions in the pathway cell wall biogenesis; peptidoglycan biosynthesis. Cell wall formation. In Rhodopseudomonas palustris (strain BisB18), this protein is D-alanine--D-alanine ligase.